Here is a 282-residue protein sequence, read N- to C-terminus: Bifunctional protein FolD 2 (282 aa).

NADP(+) is bound by residues Gly165–Ser167 and Ser190.

This sequence belongs to the tetrahydrofolate dehydrogenase/cyclohydrolase family. Homodimer.

It carries out the reaction (6R)-5,10-methylene-5,6,7,8-tetrahydrofolate + NADP(+) = (6R)-5,10-methenyltetrahydrofolate + NADPH. The catalysed reaction is (6R)-5,10-methenyltetrahydrofolate + H2O = (6R)-10-formyltetrahydrofolate + H(+). It participates in one-carbon metabolism; tetrahydrofolate interconversion. Catalyzes the oxidation of 5,10-methylenetetrahydrofolate to 5,10-methenyltetrahydrofolate and then the hydrolysis of 5,10-methenyltetrahydrofolate to 10-formyltetrahydrofolate. The polypeptide is Bifunctional protein FolD 2 (Acinetobacter baylyi (strain ATCC 33305 / BD413 / ADP1)).